The chain runs to 415 residues: DNA polymerase IV (415 aa).

The UmuC domain maps to 15–196 (ILHVDMNCFF…LPVGAMHGIG (182 aa)). D19 and D115 together coordinate Mg(2+). E116 is an active-site residue. The segment at 238 to 260 (KGMDDRQVDPSQMGQHKSVGNSM) is disordered. A compositionally biased stretch (polar residues) spans 246-260 (DPSQMGQHKSVGNSM).

It belongs to the DNA polymerase type-Y family. As to quaternary structure, monomer. The cofactor is Mg(2+).

The protein localises to the cytoplasm. It catalyses the reaction DNA(n) + a 2'-deoxyribonucleoside 5'-triphosphate = DNA(n+1) + diphosphate. In terms of biological role, poorly processive, error-prone DNA polymerase involved in untargeted mutagenesis. Copies undamaged DNA at stalled replication forks, which arise in vivo from mismatched or misaligned primer ends. These misaligned primers can be extended by PolIV. Exhibits no 3'-5' exonuclease (proofreading) activity. May be involved in translesional synthesis, in conjunction with the beta clamp from PolIII. The protein is DNA polymerase IV of Bacillus cereus (strain ZK / E33L).